We begin with the raw amino-acid sequence, 581 residues long: Proline--tRNA ligase (581 aa).

This sequence belongs to the class-II aminoacyl-tRNA synthetase family. ProS type 1 subfamily. Homodimer.

It is found in the cytoplasm. The catalysed reaction is tRNA(Pro) + L-proline + ATP = L-prolyl-tRNA(Pro) + AMP + diphosphate. Its function is as follows. Catalyzes the attachment of proline to tRNA(Pro) in a two-step reaction: proline is first activated by ATP to form Pro-AMP and then transferred to the acceptor end of tRNA(Pro). As ProRS can inadvertently accommodate and process non-cognate amino acids such as alanine and cysteine, to avoid such errors it has two additional distinct editing activities against alanine. One activity is designated as 'pretransfer' editing and involves the tRNA(Pro)-independent hydrolysis of activated Ala-AMP. The other activity is designated 'posttransfer' editing and involves deacylation of mischarged Ala-tRNA(Pro). The misacylated Cys-tRNA(Pro) is not edited by ProRS. This chain is Proline--tRNA ligase, found in Blochmanniella floridana.